Consider the following 398-residue polypeptide: Succinate--CoA ligase [ADP-forming] subunit beta (398 aa).

One can recognise an ATP-grasp domain in the interval 9–254 (KRLLHTYGAP…LSEEDEKEIE (246 aa)). ATP is bound by residues Lys-46, 53–55 (GRG), Glu-109, Ala-112, and Glu-117. Mg(2+) contacts are provided by Asn-209 and Asp-223. Substrate is bound by residues Asn-274 and 331 to 333 (GIM).

This sequence belongs to the succinate/malate CoA ligase beta subunit family. In terms of assembly, heterotetramer of two alpha and two beta subunits. The cofactor is Mg(2+).

The catalysed reaction is succinate + ATP + CoA = succinyl-CoA + ADP + phosphate. It carries out the reaction GTP + succinate + CoA = succinyl-CoA + GDP + phosphate. Its pathway is carbohydrate metabolism; tricarboxylic acid cycle; succinate from succinyl-CoA (ligase route): step 1/1. Its function is as follows. Succinyl-CoA synthetase functions in the citric acid cycle (TCA), coupling the hydrolysis of succinyl-CoA to the synthesis of either ATP or GTP and thus represents the only step of substrate-level phosphorylation in the TCA. The beta subunit provides nucleotide specificity of the enzyme and binds the substrate succinate, while the binding sites for coenzyme A and phosphate are found in the alpha subunit. The protein is Succinate--CoA ligase [ADP-forming] subunit beta of Brucella anthropi (strain ATCC 49188 / DSM 6882 / CCUG 24695 / JCM 21032 / LMG 3331 / NBRC 15819 / NCTC 12168 / Alc 37) (Ochrobactrum anthropi).